The following is a 354-amino-acid chain: Dihydroflavonol 4-reductase (354 aa).

The NADP(+) site is built by Lys-44 and Tyr-163.

It belongs to the NAD(P)-dependent epimerase/dehydratase family. Dihydroflavonol-4-reductase subfamily.

It carries out the reaction a (2R,3S,4S)-leucoanthocyanidin + NADP(+) = a (2R,3R)-dihydroflavonol + NADPH + H(+). The enzyme catalyses (2S)-flavan-4-ol + NADP(+) = (2S)-flavanone + NADPH + H(+). It functions in the pathway pigment biosynthesis; anthocyanin biosynthesis. In terms of biological role, bifunctional enzyme involved in flavonoid metabolism. This chain is Dihydroflavonol 4-reductase (ANT18), found in Hordeum vulgare (Barley).